We begin with the raw amino-acid sequence, 682 residues long: Protein SPT2 homolog (682 aa).

An important for interaction with DNA region spans residues 1–569; the sequence is MDFREILLIA…PLLSGYRSAQ (569 aa). Residue Lys37 forms a Glycyl lysine isopeptide (Lys-Gly) (interchain with G-Cter in SUMO2) linkage. Positions 46–82 form a coiled coil; it reads AFLRRKEEELRQKALEEKKRKEELVKKRIELKHDKKA. The interval 80–170 is disordered; it reads KKARAMAKRT…SAPSPMNFTD (91 aa). The span at 101 to 111 shows a compositional bias: basic and acidic residues; sequence VEEKTKKKQLV. Positions 121-131 are enriched in acidic residues; that stretch reads QEYDVEEEDFI. A compositionally biased stretch (low complexity) spans 156–165; that stretch reads KAPLKSAPSP. Lys186 participates in a covalent cross-link: Glycyl lysine isopeptide (Lys-Gly) (interchain with G-Cter in SUMO2). Residues 187-208 show a composition bias toward basic and acidic residues; sequence VVKKAEDRPLTAEELREREFLE. Disordered stretches follow at residues 187 to 533 and 549 to 595; these read VVKK…TKPR and RSSN…DEYD. Polar residues-rich tracts occupy residues 267–280, 317–334, 371–393, 400–409, and 419–432; these read STAS…SSPK, STCS…TQKS, PGSN…TLSS, QNGSSSSGPE, and ASNS…LNGT. A Phosphoserine modification is found at Ser277. Composition is skewed to low complexity over residues 435 to 460 and 490 to 504; these read PGRP…RPVG and SGPG…PAGR. The tract at residues 570–682 is important for interaction with histones; that stretch reads GPQRLPFPTG…RRKAKKLKRH (113 aa). The residue at position 581 (Lys581) is an N6-acetyllysine. The segment covering 586 to 595 has biased composition (acidic residues); the sequence is YEEDDDDEYD. Phosphoserine is present on Ser596. 2 stretches are compositionally biased toward basic and acidic residues: residues 641 to 652 and 663 to 672; these read SWKEQQKEEAKS and EMRREEEELK. Residues 641–682 form a disordered region; the sequence is SWKEQQKEEAKSLRLGMQEDLEEMRREEEELKRRKAKKLKRH. Residues 642 to 682 adopt a coiled-coil conformation; the sequence is WKEQQKEEAKSLRLGMQEDLEEMRREEEELKRRKAKKLKRH. A compositionally biased stretch (basic residues) spans 673–682; sequence RRKAKKLKRH.

The protein belongs to the SPT2 family. In terms of assembly, interacts with histones. Interacts with a heterotetrameric complex formed by histone H3 and H4, especially when the histone tetramer is not bound to DNA. Interacts with histone H3.3.

It localises to the nucleus. Its subcellular location is the nucleolus. Functionally, histone chaperone that stabilizes pre-existing histone tetramers and regulates replication-independent histone exchange on chromatin. Required for normal chromatin refolding in the coding region of transcribed genes, and for the suppression of spurious transcription. Binds DNA and histones and promotes nucleosome assembly (in vitro). Facilitates formation of tetrameric histone complexes containing histone H3 and H4. Modulates RNA polymerase 1-mediated transcription. Binds DNA, with a preference for branched DNA species, such as Y-form DNA and Holliday junction DNA. The chain is Protein SPT2 homolog (Spty2d1) from Mus musculus (Mouse).